The primary structure comprises 352 residues: Chorismate synthase (352 aa).

NADP(+) is bound at residue R48. Residues R125–S127, N238–A239, G278, K293–S297, and R319 contribute to the FMN site.

The protein belongs to the chorismate synthase family. As to quaternary structure, homotetramer. It depends on FMNH2 as a cofactor.

It carries out the reaction 5-O-(1-carboxyvinyl)-3-phosphoshikimate = chorismate + phosphate. It participates in metabolic intermediate biosynthesis; chorismate biosynthesis; chorismate from D-erythrose 4-phosphate and phosphoenolpyruvate: step 7/7. Catalyzes the anti-1,4-elimination of the C-3 phosphate and the C-6 proR hydrogen from 5-enolpyruvylshikimate-3-phosphate (EPSP) to yield chorismate, which is the branch point compound that serves as the starting substrate for the three terminal pathways of aromatic amino acid biosynthesis. This reaction introduces a second double bond into the aromatic ring system. This Legionella pneumophila (strain Paris) protein is Chorismate synthase.